A 337-amino-acid polypeptide reads, in one-letter code: Adenosine deaminase (337 aa).

Residues His15 and His17 each coordinate Zn(2+). Residues His17, Asp19, and Gly172 each coordinate substrate. His199 is a Zn(2+) binding site. Residue Glu202 is the Proton donor of the active site. Asp279 contacts Zn(2+).

This sequence belongs to the metallo-dependent hydrolases superfamily. Adenosine and AMP deaminases family. Adenosine deaminase subfamily. Zn(2+) is required as a cofactor.

The catalysed reaction is adenosine + H2O + H(+) = inosine + NH4(+). The enzyme catalyses 2'-deoxyadenosine + H2O + H(+) = 2'-deoxyinosine + NH4(+). Functionally, catalyzes the hydrolytic deamination of adenosine and 2-deoxyadenosine. This chain is Adenosine deaminase, found in Enterococcus faecalis (strain ATCC 700802 / V583).